We begin with the raw amino-acid sequence, 339 residues long: UDP-N-acetylenolpyruvoylglucosamine reductase (339 aa).

An FAD-binding PCMH-type domain is found at Val19 to Val189. Arg166 is a catalytic residue. Ser239 serves as the catalytic Proton donor. Residue Glu335 is part of the active site.

This sequence belongs to the MurB family. Requires FAD as cofactor.

The protein resides in the cytoplasm. The enzyme catalyses UDP-N-acetyl-alpha-D-muramate + NADP(+) = UDP-N-acetyl-3-O-(1-carboxyvinyl)-alpha-D-glucosamine + NADPH + H(+). Its pathway is cell wall biogenesis; peptidoglycan biosynthesis. Its function is as follows. Cell wall formation. This chain is UDP-N-acetylenolpyruvoylglucosamine reductase, found in Pseudomonas syringae pv. syringae (strain B728a).